The primary structure comprises 141 residues: Protein NrdI (141 aa).

This sequence belongs to the NrdI family.

Its function is as follows. Probably involved in ribonucleotide reductase function. The protein is Protein NrdI of Wigglesworthia glossinidia brevipalpis.